The following is a 37-amino-acid chain: Large ribosomal subunit protein bL36 (37 aa).

It belongs to the bacterial ribosomal protein bL36 family.

The chain is Large ribosomal subunit protein bL36 from Halorhodospira halophila (strain DSM 244 / SL1) (Ectothiorhodospira halophila (strain DSM 244 / SL1)).